Reading from the N-terminus, the 341-residue chain is Holliday junction branch migration complex subunit RuvB (341 aa).

A large ATPase domain (RuvB-L) region spans residues Met1–Tyr182. ATP is bound by residues Leu21, Arg22, Gly63, Lys66, Thr67, Thr68, Glu129–Tyr131, Arg172, Tyr182, and Arg219. Thr67 lines the Mg(2+) pocket. The tract at residues Thr183 to Glu253 is small ATPAse domain (RuvB-S). Positions Asn256–Ser341 are head domain (RuvB-H). Positions 311 and 316 each coordinate DNA.

The protein belongs to the RuvB family. Homohexamer. Forms an RuvA(8)-RuvB(12)-Holliday junction (HJ) complex. HJ DNA is sandwiched between 2 RuvA tetramers; dsDNA enters through RuvA and exits via RuvB. An RuvB hexamer assembles on each DNA strand where it exits the tetramer. Each RuvB hexamer is contacted by two RuvA subunits (via domain III) on 2 adjacent RuvB subunits; this complex drives branch migration. In the full resolvosome a probable DNA-RuvA(4)-RuvB(12)-RuvC(2) complex forms which resolves the HJ.

The protein resides in the cytoplasm. The catalysed reaction is ATP + H2O = ADP + phosphate + H(+). In terms of biological role, the RuvA-RuvB-RuvC complex processes Holliday junction (HJ) DNA during genetic recombination and DNA repair, while the RuvA-RuvB complex plays an important role in the rescue of blocked DNA replication forks via replication fork reversal (RFR). RuvA specifically binds to HJ cruciform DNA, conferring on it an open structure. The RuvB hexamer acts as an ATP-dependent pump, pulling dsDNA into and through the RuvAB complex. RuvB forms 2 homohexamers on either side of HJ DNA bound by 1 or 2 RuvA tetramers; 4 subunits per hexamer contact DNA at a time. Coordinated motions by a converter formed by DNA-disengaged RuvB subunits stimulates ATP hydrolysis and nucleotide exchange. Immobilization of the converter enables RuvB to convert the ATP-contained energy into a lever motion, pulling 2 nucleotides of DNA out of the RuvA tetramer per ATP hydrolyzed, thus driving DNA branch migration. The RuvB motors rotate together with the DNA substrate, which together with the progressing nucleotide cycle form the mechanistic basis for DNA recombination by continuous HJ branch migration. Branch migration allows RuvC to scan DNA until it finds its consensus sequence, where it cleaves and resolves cruciform DNA. The polypeptide is Holliday junction branch migration complex subunit RuvB (Syntrophotalea carbinolica (strain DSM 2380 / NBRC 103641 / GraBd1) (Pelobacter carbinolicus)).